The following is a 497-amino-acid chain: uncharacterized protein (497 aa).

Residues 474–497 are disordered; the sequence is DPRNPFSNGKPSGWSDEDVAWLKR. Residues 488–497 are compositionally biased toward acidic residues; the sequence is SDEDVAWLKR.

This is an uncharacterized protein from Bacillus anthracis.